The primary structure comprises 373 residues: Arfaptin-1 (373 aa).

The segment at 1–47 is disordered; that stretch reads MAQESPKNSAAEIPVTSNGEVDDSREHSFNRDLKHSLPSGLGLSETQ. Ala2 carries the post-translational modification N-acetylalanine. Phosphoserine occurs at positions 5, 28, 36, 39, 69, 79, and 132. Residues 22 to 35 show a composition bias toward basic and acidic residues; that stretch reads DDSREHSFNRDLKH. The AH domain occupies 153-353; sequence TVDLELEAQI…NQKQLEQTLK (201 aa). The residue at position 361 (Thr361) is a Phosphothreonine.

In terms of assembly, forms homodimers or heterodimers with ARFIP2. Interacts with non-myristoylated GTP-bound ARF3, but not to GDP-bound ARF3. Interacts with ARF1. Binds with lower affinity to ARF5 and with very little affinity to ARF6. Interacts with ARL1. Interacts with ATG9A. Post-translationally, phosphorylated by PRKD1; phosphorylation delocalizes ARFIP1 from the Golgi and disrupts its ability to inhibit the activity of ADP-ribosylation factor, an important component of the vesicle scission machinery. Ubiquitously expressed. Higher levels in liver, pancreas, placenta, skeletal muscle and heart.

The protein localises to the golgi apparatus. It localises to the trans-Golgi network membrane. Its function is as follows. Plays a role in controlling biogenesis of secretory granules at the trans-Golgi network. Mechanistically, binds ARF-GTP at the neck of a growing secretory granule precursor and forms a protective scaffold. Once the granule precursor has been completely loaded, active PRKD1 phosphorylates ARFIP1 and releases it from ARFs. In turn, ARFs induce fission. Through this mechanism, ensures proper secretory granule formation at the Golgi of pancreatic beta cells. The polypeptide is Arfaptin-1 (Homo sapiens (Human)).